We begin with the raw amino-acid sequence, 183 residues long: SAGA-associated factor 11 homolog (183 aa).

The segment at 98–119 (CSCPNCNRIVAASRFAPHLEKC) adopts an SGF11-type zinc-finger fold. The interval 140-167 (GGNYFGADEDDEDDADWSGEKRKKKIAP) is disordered. Positions 146–156 (ADEDDEDDADW) are enriched in acidic residues.

This sequence belongs to the SGF11 family. As to quaternary structure, component of some SAGA transcription coactivator-HAT complexes. Within the SAGA complex, participates in a subcomplex of SAGA called the DUB module (deubiquitination module).

It localises to the nucleus. Its function is as follows. Component of the transcription regulatory histone acetylation (HAT) complex SAGA, a multiprotein complex that activates transcription by remodeling chromatin and mediating histone acetylation and deubiquitination. Within the SAGA complex, participates in a subcomplex that specifically deubiquitinates histone H2B. The SAGA complex is recruited to specific gene promoters by activators, where it is required for transcription. The chain is SAGA-associated factor 11 homolog from Culex quinquefasciatus (Southern house mosquito).